The primary structure comprises 150 residues: Transcriptional regulator MraZ (150 aa).

SpoVT-AbrB domains are found at residues 6 to 52 and 80 to 126; these read EFFN…PYQE and AVEC…NRTK.

Belongs to the MraZ family. As to quaternary structure, forms oligomers.

The protein resides in the cytoplasm. Its subcellular location is the nucleoid. The sequence is that of Transcriptional regulator MraZ from Syntrophotalea carbinolica (strain DSM 2380 / NBRC 103641 / GraBd1) (Pelobacter carbinolicus).